The chain runs to 124 residues: SPbeta prophage-derived uncharacterized protein YoqO (124 aa).

The next 2 helical transmembrane spans lie at 54 to 74 (LVVI…LLSF) and 88 to 108 (VIFI…ISIM).

The protein localises to the cell membrane. This is SPbeta prophage-derived uncharacterized protein YoqO (yoqO) from Bacillus subtilis (strain 168).